Consider the following 123-residue polypeptide: MAKIKARDLRGKKKEELLKQLDDLKNEPSQLRVAKVTGGAASKLTKICVVRKSIARVLTVINQTQKENLRKFYKGKKYKPLDLRPRKTRALRRRLNKHEESLRTKKQQRKDLLYSIRKFAVKA.

This sequence belongs to the universal ribosomal protein uL29 family. Component of the large ribosomal subunit.

The protein resides in the cytoplasm. Its function is as follows. Component of the large ribosomal subunit. The ribosome is a large ribonucleoprotein complex responsible for the synthesis of proteins in the cell. In Platichthys flesus (European flounder), this protein is Large ribosomal subunit protein uL29 (rpl35).